The chain runs to 1507 residues: Transient receptor potential cation channel subfamily M member 2 (1507 aa).

A compositionally biased stretch (basic and acidic residues) spans 1 to 11 (MEPLDQRRTDS). Residues 1 to 24 (MEPLDQRRTDSDQEEGFGVQSRRA) form a disordered region. The Cytoplasmic portion of the chain corresponds to 1 to 751 (MEPLDQRRTD…WWGQLCVDNG (751 aa)). The ADP-D-ribose site is built by Thr173, Asn178, Arg301, Gly332, and Thr335. The residue at position 739 (Thr739) is a Phosphothreonine. The stretch at 752-768 (LWRIILCMLAFPLLFTG) is an intramembrane region. Residues 769 to 793 (FISFREKRLQALCRLARVRAFFNAP) lie on the Cytoplasmic side of the membrane. Residues 794-814 (VVIFYLNILSYFAFLCLFAYV) form a helical membrane-spanning segment. Residues 815 to 825 (LMVDFQPSPSW) lie on the Extracellular side of the membrane. A helical transmembrane segment spans residues 826-846 (CEYLIYLWLFSLVCEETRQLF). Ca(2+) contacts are provided by Glu841 and Gln844. Residues 847-865 (YDPDGCGLMKMASLYFSDF) lie on the Cytoplasmic side of the membrane. Residues 866 to 886 (WNKLDVGAILLFIAGLTCRLI) form a helical membrane-spanning segment. Asn867 lines the Ca(2+) pocket. At 887–894 (PATLYPGR) the chain is on the extracellular side. Residues 895-915 (IILSLDFIMFCLRLMHIFTIS) form a helical membrane-spanning segment. The Cytoplasmic portion of the chain corresponds to 916 to 927 (KTLGPKIIIVKR). The helical transmembrane segment at 928–948 (MMKDVFFFLFLLAVWVVSFGV) threads the bilayer. The Extracellular portion of the chain corresponds to 949-968 (AKQAILIHNESRVDWIFRGV). An intramembrane region (pore-forming) is located at residues 969–983 (IYHSYLTIFGQIPTY). The Selectivity filter motif lies at 977-980 (FGQI). The Extracellular portion of the chain corresponds to 984–1020 (IDGVNFSMDQCSPNGTDPYKPKCPESDWTGQAPAFPE). Cys994 and Cys1006 are oxidised to a cystine. Residues 1021–1042 (WLTVTLLCLYLLFANILLLNLL) form a helical membrane-spanning segment. The Cytoplasmic segment spans residues 1043 to 1077 (IAMFNYTFQEVQEHTDQIWKFQRHDLIEEYHGRPP). A Ca(2+)-binding site is contributed by Glu1071. The stretch at 1078-1096 (APPPLILLSHLQLLIKRIV) is an intramembrane region. Residues 1097–1507 (LKIPAKRHKQ…KVASLFGAHF (411 aa)) lie on the Cytoplasmic side of the membrane. In terms of domain architecture, Nudix hydrolase spans 1351 to 1502 (RWKRNQGGGI…KKILQKVASL (152 aa)). Ser1379 contributes to the ADP-D-ribose binding site. Residues 1387–1408 (GSREPGKMLPRKLKQVLQQEYW) carry the Nudix box motif. Residues Asp1428, Arg1430, Tyr1489, and Asn1491 each coordinate ADP-D-ribose.

This sequence belongs to the transient receptor (TC 1.A.4) family. LTrpC subfamily. TRPM2 sub-subfamily. In terms of assembly, homotetramer. Post-translationally, phosphorylation of TRPM2 at Thr-739 by protein kinase C (PKC) counteracts the effect of cytosolic Ca(2+) and elevates the temperature threshold. Detected in pancreas beta-cells. Detected in fetal brain cortex neurons (at protein level).

The protein resides in the cell membrane. Its subcellular location is the perikaryon. The protein localises to the cell projection. It localises to the cytoplasmic vesicle. It is found in the lysosome. It catalyses the reaction Ca(2+)(in) = Ca(2+)(out). The catalysed reaction is Na(+)(in) = Na(+)(out). With respect to regulation, activated by intracellular ADP-ribose, beta-NAD (NAD(+)) and similar compounds, and by oxidative stress caused by reactive oxygen or nitrogen species. Ca(2+) and PI(4,5)P2 are required for channel opening by ADP-ribose. Activation by ADP-ribose and beta-NAD is strongly increased by moderate heat (35 to 40 degrees Celsius). Likewise, reactive oxygen species lower the threshold for activation by moderate heat (37 degrees Celsius). Activated by moderate heat (35 to 40 degrees Celsius). Inactivated by exposure to extracellular pH between 4.0 and 6.5; irreversibly inactivated when open channels are exposed to extracellular pH between 4.0 and 6.5, while pre-exposure of closed channels to extracellular pH 5.5 gives rise to currents that rapidly inactivate, but protects against irreversible inactivation. Inactivated by intracellular ATP. Activated by arachidonic acid. Inhibited by 2-aminoethyl diphenylborinate (2-APB). Functionally, nonselective, voltage-independent cation channel that mediates Na(+) and Ca(2+) influx, leading to increased cytoplasmic Ca(2+) levels. Functions as a ligand-gated ion channel gated by intracellular adenosine diphosphate ribose (ADP-ribose), Ca(2+), warm temperature, and oxidative stress. The precise physiological activators are under debate; the true, physiological activators may be ADP-ribose and ADP-ribose-2'-phosphate. Binding of ADP-ribose to the cytoplasmic Nudix domain causes a conformation change; the channel is primed but still requires Ca(2+) binding to trigger channel opening. Extracellular Ca(2+) passes through the channel and increases channel activity. Also contributes to Ca(2+) release from intracellular stores in response to ADP-ribose. Plays a role in numerous processes that involve signaling via intracellular Ca(2+) levels. Besides, mediates the release of lysosomal Zn(2+) stores in response to reactive oxygen species, leading to increased cytosolic Zn(2+) levels. Plays a role in insulin secretion, a process that requires increased cytoplasmic Ca(2+) levels. Required for normal IFNG and cytokine secretion and normal innate immune immunity in response to bacterial infection. Required for normal phagocytosis and cytokine release by macrophages exposed to zymosan (in vitro). Plays a role in dendritic cell differentiation and maturation, and in dendritic cell chemotaxis via its role in regulating cytoplasmic Ca(2+) levels. Plays a role in the regulation of the reorganization of the actin cytoskeleton and filopodia formation in response to reactive oxygen species via its function in increasing cytoplasmic Ca(2+) and Zn(2+) levels. Confers susceptibility to cell death following oxidative stress. The polypeptide is Transient receptor potential cation channel subfamily M member 2 (Rattus norvegicus (Rat)).